Consider the following 267-residue polypeptide: MAVTPYVDTSRLDGKVALVTGSGRGIGAAMAIHLANRGAKVVVNYANSVEAANKVVDEIKSRGGEAIALQADVGEVSQTTKLMDDAVAHFGQLDIVCSNSGVVSFGHLKDVTEEEYDRVFRINTRGQFFVAREAYKHLSVGGRIIMMGSITGQAKGVPKHAVYSASKGAIETFVRCMAIDCGDKKITVNAVAPGGIKTDMYHAVCKEYIPNGENLTDEEVDEYAKTWSPMDRVGQPMDIAKVVGFLASEDGEWINGKVIGIDGAACM.

NADP(+) is bound by residues Ile26, Asp72, Asn99, and Arg132. Ser149 functions as the Proton donor in the catalytic mechanism. Tyr163, Lys167, Ile196, and Thr198 together coordinate NADP(+). The active-site Proton acceptor is the Tyr163. Lys167 acts as the Lowers pKa of active site Tyr in catalysis.

Belongs to the short-chain dehydrogenases/reductases (SDR) family. As to quaternary structure, homotetramer.

The enzyme catalyses scytalone + NADP(+) = naphthalene-1,3,6,8-tetrol + NADPH + H(+). The protein operates within pigment biosynthesis; melanin biosynthesis. Its function is as follows. Probable tetrahydroxynaphthalene reductase; part of the gene cluster 29 that mediates the biosynthesis dihydroxynaphthalene (DHN)-melanin, a bluish-green pigment and a structural component of the conidial wall. Catalyzes the NADPH-dependent reduction of 1,3,6,8-tetrahydroxynaphthalene (T4HN) into (+)-scytalone. The protein is Probable tetrahydroxynaphthalene reductase MYCGRDRAFT_87994 of Zymoseptoria tritici (strain CBS 115943 / IPO323) (Speckled leaf blotch fungus).